We begin with the raw amino-acid sequence, 151 residues long: Deoxyuridine 5'-triphosphate nucleotidohydrolase (151 aa).

Substrate-binding positions include 70-72 (RSG), Asn-83, 87-89 (LID), and Met-97.

It belongs to the dUTPase family. Mg(2+) serves as cofactor.

The enzyme catalyses dUTP + H2O = dUMP + diphosphate + H(+). It participates in pyrimidine metabolism; dUMP biosynthesis; dUMP from dCTP (dUTP route): step 2/2. Functionally, this enzyme is involved in nucleotide metabolism: it produces dUMP, the immediate precursor of thymidine nucleotides and it decreases the intracellular concentration of dUTP so that uracil cannot be incorporated into DNA. The sequence is that of Deoxyuridine 5'-triphosphate nucleotidohydrolase from Pseudomonas putida (strain ATCC 47054 / DSM 6125 / CFBP 8728 / NCIMB 11950 / KT2440).